The sequence spans 153 residues: uncharacterized protein (153 aa).

An N-acetylalanine modification is found at A2.

This is an uncharacterized protein from Arabidopsis thaliana (Mouse-ear cress).